The chain runs to 669 residues: MVQKFQSPVRVYKYPFELVMKAYERRFPKCPQMPIVLDCDVIKIESLENGAKTNTTRRCKLAVDAPYIFKKLIGVDFVYFLQHNYLDMSNRTLSIEAVNESFSSRIEIFERCRYYAHPDNAEWTCFDQTATLDIKNFFGFEHSMEKMGMKQYTQTTLKGKEIIEYFINQLEQEGVTHVDRWVPPLDAAKSPTPEQKQHHDILLDGDFIARNLGQLSPMQESKLLELRKMLDGVDDLERVPSYQTILRFLSARDWHVSQAFAMLCDSLQWRKEHRMDSLLEEYTEPAVVVEHFPGGWHHHDKDGRPIYILRLGHMDVKGLLKSLGMEGLLRLALHICEEGIQKINESAERLDKPVLNWSLLVDLEGLSMRHLWRPGIKALLYIIETVERNYPETMGRVLVVRAPRVFPIAWTIVSAFIDEHTRSKFLFYGPDCEHMKDGLAQYIDEEIVPDFLGGPCKTMIHEGGLVPKTLYKANSLEDHDDDVTIVSPGAGAATATASAEASLAPVALAPMKRLSANHQHDHQNLYKSVDLKPGFSHELLIRNEDPKSVLTWDFDVMRNDLHFTLYRVTQELPEKNDDAVSYFDLQDFVEGTNYFREEPTLICRHKESVQGSHVMHHNDSYLMHWFSPSGAQLNLFYEVLSSVNYKGSMTSLQSAFSSNSSAASSVQSR.

Residues 3–175 (QKFQSPVRVY…FINQLEQEGV (173 aa)) form the PRELI/MSF1 domain. Residues 284–460 (EPAVVVEHFP…FLGGPCKTMI (177 aa)) form the CRAL-TRIO domain. Residues 522–641 (HQNLYKSVDL…QLNLFYEVLS (120 aa)) enclose the GOLD domain.

Its subcellular location is the mitochondrion. In Drosophila pseudoobscura pseudoobscura (Fruit fly), this protein is Protein real-time.